The following is a 188-amino-acid chain: Protein GrpE 2 (188 aa).

This sequence belongs to the GrpE family. Homodimer.

The protein localises to the cytoplasm. In terms of biological role, participates actively in the response to hyperosmotic and heat shock by preventing the aggregation of stress-denatured proteins, in association with DnaK and GrpE. It is the nucleotide exchange factor for DnaK and may function as a thermosensor. Unfolded proteins bind initially to DnaJ; upon interaction with the DnaJ-bound protein, DnaK hydrolyzes its bound ATP, resulting in the formation of a stable complex. GrpE releases ADP from DnaK; ATP binding to DnaK triggers the release of the substrate protein, thus completing the reaction cycle. Several rounds of ATP-dependent interactions between DnaJ, DnaK and GrpE are required for fully efficient folding. The chain is Protein GrpE 2 from Buchnera aphidicola subsp. Acyrthosiphon pisum (strain APS) (Acyrthosiphon pisum symbiotic bacterium).